A 195-amino-acid polypeptide reads, in one-letter code: Molybdenum cofactor guanylyltransferase (195 aa).

GTP-binding positions include 10–12 (LAG), K23, N51, D69, and D99. D99 contributes to the Mg(2+) binding site.

The protein belongs to the MobA family. As to quaternary structure, monomer. The cofactor is Mg(2+).

Its subcellular location is the cytoplasm. The catalysed reaction is Mo-molybdopterin + GTP + H(+) = Mo-molybdopterin guanine dinucleotide + diphosphate. Transfers a GMP moiety from GTP to Mo-molybdopterin (Mo-MPT) cofactor (Moco or molybdenum cofactor) to form Mo-molybdopterin guanine dinucleotide (Mo-MGD) cofactor. The sequence is that of Molybdenum cofactor guanylyltransferase from Histophilus somni (strain 129Pt) (Haemophilus somnus).